We begin with the raw amino-acid sequence, 340 residues long: Cathepsin S (340 aa).

Residues 1–17 (MRAPGHAAIRWLFWMPL) form the signal peptide. The propeptide at 18-122 (VCSVAMEQLQ…VTFRSYSNRT (105 aa)) is activation peptide. An N-linked (GlcNAc...) asparagine glycan is attached at N120. Intrachain disulfides connect C134/C233, C144/C189, C178/C222, and C281/C329. The active site involves C147. Residues H287 and N307 contribute to the active site.

Belongs to the peptidase C1 family. As to expression, widely expressed with highest expression found in non-skeletal tissues. Relatively high levels found in skeletal tissues. Expressed in spleen, B cells, dendritic cells and macrophages.

Its subcellular location is the lysosome. It is found in the secreted. It localises to the cytoplasmic vesicle. The protein localises to the phagosome. The catalysed reaction is Similar to cathepsin L, but with much less activity on Z-Phe-Arg-|-NHMec, and more activity on the Z-Val-Val-Arg-|-Xaa compound.. Functionally, thiol protease. Key protease responsible for the removal of the invariant chain from MHC class II molecules and MHC class II antigen presentation. The bond-specificity of this proteinase is in part similar to the specificities of cathepsin L. This chain is Cathepsin S (Ctss), found in Mus musculus (Mouse).